We begin with the raw amino-acid sequence, 500 residues long: NAD(P)H-quinone oxidoreductase subunit 2 A, chloroplastic (500 aa).

13 helical membrane passes run 14-34, 47-67, 89-109, 114-134, 139-159, 173-193, 217-237, 285-305, 313-333, 344-364, 385-405, 408-428, and 474-494; these read LLLF…GLIL, IPWF…ALLF, IFQF…VEYI, MAIT…MFLC, FITI…LSGY, YLLM…WLYG, PGIS…LSPA, WHLL…LIAI, MLAY…IVGD, YMLF…LFGL, ALSL…AGFF, LHLF…IGLL, and MIVC…IIAI.

The protein belongs to the complex I subunit 2 family. In terms of assembly, NDH is composed of at least 16 different subunits, 5 of which are encoded in the nucleus.

It localises to the plastid. It is found in the chloroplast thylakoid membrane. The catalysed reaction is a plastoquinone + NADH + (n+1) H(+)(in) = a plastoquinol + NAD(+) + n H(+)(out). It carries out the reaction a plastoquinone + NADPH + (n+1) H(+)(in) = a plastoquinol + NADP(+) + n H(+)(out). Its function is as follows. NDH shuttles electrons from NAD(P)H:plastoquinone, via FMN and iron-sulfur (Fe-S) centers, to quinones in the photosynthetic chain and possibly in a chloroplast respiratory chain. The immediate electron acceptor for the enzyme in this species is believed to be plastoquinone. Couples the redox reaction to proton translocation, and thus conserves the redox energy in a proton gradient. This Pelargonium hortorum (Common geranium) protein is NAD(P)H-quinone oxidoreductase subunit 2 A, chloroplastic.